Consider the following 405-residue polypeptide: Adenylosuccinate synthetase (405 aa).

Residues 12 to 18 (GDEGKGK) and 40 to 42 (GHT) each bind GTP. Catalysis depends on D13, which acts as the Proton acceptor. The Mg(2+) site is built by D13 and G40. Residues 13–16 (DEGK), 38–41 (NAGH), T121, R135, Q213, T228, and R297 contribute to the IMP site. Catalysis depends on H41, which acts as the Proton donor. 293 to 299 (TTTGRAR) lines the substrate pocket. GTP-binding positions include R299, 325 to 327 (KMD), and 390 to 392 (SAG).

This sequence belongs to the adenylosuccinate synthetase family. As to quaternary structure, homodimer. Requires Mg(2+) as cofactor.

It localises to the cytoplasm. It carries out the reaction IMP + L-aspartate + GTP = N(6)-(1,2-dicarboxyethyl)-AMP + GDP + phosphate + 2 H(+). It functions in the pathway purine metabolism; AMP biosynthesis via de novo pathway; AMP from IMP: step 1/2. Plays an important role in the de novo pathway of purine nucleotide biosynthesis. Catalyzes the first committed step in the biosynthesis of AMP from IMP. The sequence is that of Adenylosuccinate synthetase from Deinococcus deserti (strain DSM 17065 / CIP 109153 / LMG 22923 / VCD115).